The chain runs to 434 residues: MSVFQGEVSSLPPDKSISHRAAIIGSLAEGTTEITNFSGGFDNQSTLSVLRDLGISVRQDEVPAGDGRIVRHVVIESNGLWSFREPSEPLMCNNSGSTMRMMAGILAAQPFRSELVGDASLMKRPMKRVADPLRMMGADISLSDAGTAPVVINGTKDLKTIEYLLPVPSAQVKSLVALAALHADGQSKIIEPIRSRDHTELMLGLETIDRPDGVREIIIDGRKPIAAKPFKVPADPSAACFMIALGLLGERSEIVLRDVCLNPTRVAYIDVLQEAGAGLGIENVRSEGGEPVGDIVVRSCSSLAPLRISDHAVVAGVIDELPMLAVLSAFATGEFELHNATELRTKESDRIEAVVSNLERLGFACEQYPDGFVVKGRPTVNREEAVIECFDDHRIAMSFAIAAEAAGASLRLSDREVAGVSFPNFFALIESLKQ.

3-phosphoshikimate-binding residues include Lys15, Ser16, and Arg20. Residue Lys15 coordinates phosphoenolpyruvate. Positions 96 and 124 each coordinate phosphoenolpyruvate. 3-phosphoshikimate contacts are provided by Ser169, Gln171, Ser195, Asp319, and Lys346. Phosphoenolpyruvate is bound at residue Gln171. The active-site Proton acceptor is Asp319. Residues Arg350 and Arg394 each coordinate phosphoenolpyruvate.

This sequence belongs to the EPSP synthase family. As to quaternary structure, monomer.

It is found in the cytoplasm. The enzyme catalyses 3-phosphoshikimate + phosphoenolpyruvate = 5-O-(1-carboxyvinyl)-3-phosphoshikimate + phosphate. It participates in metabolic intermediate biosynthesis; chorismate biosynthesis; chorismate from D-erythrose 4-phosphate and phosphoenolpyruvate: step 6/7. Functionally, catalyzes the transfer of the enolpyruvyl moiety of phosphoenolpyruvate (PEP) to the 5-hydroxyl of shikimate-3-phosphate (S3P) to produce enolpyruvyl shikimate-3-phosphate and inorganic phosphate. The sequence is that of 3-phosphoshikimate 1-carboxyvinyltransferase from Chlorobaculum parvum (strain DSM 263 / NCIMB 8327) (Chlorobium vibrioforme subsp. thiosulfatophilum).